Reading from the N-terminus, the 92-residue chain is Small ribosomal subunit protein uS19 (92 aa).

It belongs to the universal ribosomal protein uS19 family.

In terms of biological role, protein S19 forms a complex with S13 that binds strongly to the 16S ribosomal RNA. The protein is Small ribosomal subunit protein uS19 of Lysinibacillus sphaericus (strain C3-41).